An 860-amino-acid polypeptide reads, in one-letter code: GPI ethanolamine phosphate transferase 2 (860 aa).

Asn123 and Asn180 each carry an N-linked (GlcNAc...) asparagine glycan. A run of 8 helical transmembrane segments spans residues 408–428 (LGGIGLGLLSTILALTVFSAL), 438–458 (LYLIILLVYFISVFGSSTVEE), 459–479 (EHQIWYWITSGWMAFLYISGS), 487–506 (FNWMFVQVFVRMMISWNQTG), 524–544 (NHPVLWILILVTYGVAFNKVW), 555–575 (LAFLLTLITTFASVGFKITQA), 576–596 (WEAGEVVPAPLLYLMGLPGTL), and 639–659 (AFLTLFLITQSRIQNIPLFMV). N-linked (GlcNAc...) asparagine glycosylation is present at Asn672. Helical transmembrane passes span 692–712 (LVLVLSVSTLLLEQVSFFSMG), 736–756 (FVGVLTFVSNWIGPLYWSTAG), 795–815 (VYVVLAFSSVAISAVMITCFF), and 834–854 (FVWTVLQFALVDVILSSIFVV).

The protein belongs to the PIGG/PIGN/PIGO family. PIGG subfamily.

It localises to the endoplasmic reticulum membrane. Its pathway is glycolipid biosynthesis; glycosylphosphatidylinositol-anchor biosynthesis. Ethanolamine phosphate transferase involved in glycosylphosphatidylinositol-anchor biosynthesis. Transfers ethanolamine phosphate to the GPI second mannose. This chain is GPI ethanolamine phosphate transferase 2 (LAS21), found in Yarrowia lipolytica (strain CLIB 122 / E 150) (Yeast).